Here is a 702-residue protein sequence, read N- to C-terminus: Elongation factor G 1 (702 aa).

A tr-type G domain is found at 8–290 (ERYRNIGISA…AVIDFLPSPV (283 aa)). GTP is bound by residues 17 to 24 (AHIDAGKT), 88 to 92 (DTPGH), and 142 to 145 (NKMD).

This sequence belongs to the TRAFAC class translation factor GTPase superfamily. Classic translation factor GTPase family. EF-G/EF-2 subfamily.

Its subcellular location is the cytoplasm. In terms of biological role, catalyzes the GTP-dependent ribosomal translocation step during translation elongation. During this step, the ribosome changes from the pre-translocational (PRE) to the post-translocational (POST) state as the newly formed A-site-bound peptidyl-tRNA and P-site-bound deacylated tRNA move to the P and E sites, respectively. Catalyzes the coordinated movement of the two tRNA molecules, the mRNA and conformational changes in the ribosome. This chain is Elongation factor G 1, found in Cupriavidus pinatubonensis (strain JMP 134 / LMG 1197) (Cupriavidus necator (strain JMP 134)).